The following is a 407-amino-acid chain: MPSVCMPTTYRPASCLSKTYLSSSCQPSNRRPTGCISSSMGTYGLFCEGAFNGNEKETMQVLNDRLANYLEKVRQLEKENAELEGKIQDVYQGQVLTMCPDYQSYFQTIEELQQKVLCTKAENARMIVHIDNAKLAADDFRTKYETELALRQLVEADTNGLRRILDELTLNKADLEAQVESLKEELLCLKRNHEEEVGVLRQQLGDRLNIEVDAAPPVDLTRMLEEMRCQYETMVETNHRDVEEWFNMQMEELNKQVATSSEQLQSYQSDIIDLRRTVNTLEIELQAQHSLRDSLENTLGETEGRFTSQLSQMQCMITNVESQLSDIRCDLERQNQEYKVLLDVKARLECEIDTYRGLLESEDSKLPCNPCSTPSCQPCAPSPGVSRTVCVPHTVCVPCSPCLQTRY.

The head stretch occupies residues 1-55 (MPSVCMPTTYRPASCLSKTYLSSSCQPSNRRPTGCISSSMGTYGLFCEGAFNGNE). In terms of domain architecture, IF rod spans 55-366 (EKETMQVLND…GLLESEDSKL (312 aa)). A coil 1A region spans residues 56–90 (KETMQVLNDRLANYLEKVRQLEKENAELEGKIQDV). Residues 91 to 101 (YQGQVLTMCPD) form a linker 1 region. The tract at residues 102 to 202 (YQSYFQTIEE…HEEEVGVLRQ (101 aa)) is coil 1B. The tract at residues 203–218 (QLGDRLNIEVDAAPPV) is linker 12. The segment at 219–362 (DLTRMLEEMR…DTYRGLLESE (144 aa)) is coil 2. The tract at residues 363-407 (DSKLPCNPCSTPSCQPCAPSPGVSRTVCVPHTVCVPCSPCLQTRY) is tail.

Belongs to the intermediate filament family. In terms of tissue distribution, cuticle of the hair shaft.

The polypeptide is Keratin, type I cuticular Ha2 (Krt32) (Mus musculus (Mouse)).